Consider the following 194-residue polypeptide: Probable RNA 2'-phosphotransferase (194 aa).

The protein belongs to the KptA/TPT1 family.

Functionally, removes the 2'-phosphate from RNA via an intermediate in which the phosphate is ADP-ribosylated by NAD followed by a presumed transesterification to release the RNA and generate ADP-ribose 1''-2''-cyclic phosphate (APPR&gt;P). May function as an ADP-ribosylase. The protein is Probable RNA 2'-phosphotransferase of Burkholderia lata (strain ATCC 17760 / DSM 23089 / LMG 22485 / NCIMB 9086 / R18194 / 383).